The chain runs to 568 residues: Peptidoglycan D,D-transpeptidase FtsI (568 aa).

Residues 19–39 form a helical membrane-spanning segment; the sequence is FVTLCSIVFLFLVILTLRIIF. Ser302 acts as the Acyl-ester intermediate in catalysis.

Belongs to the transpeptidase family. FtsI subfamily.

The protein resides in the cell inner membrane. The enzyme catalyses Preferential cleavage: (Ac)2-L-Lys-D-Ala-|-D-Ala. Also transpeptidation of peptidyl-alanyl moieties that are N-acyl substituents of D-alanine.. It functions in the pathway cell wall biogenesis; peptidoglycan biosynthesis. Catalyzes cross-linking of the peptidoglycan cell wall at the division septum. The sequence is that of Peptidoglycan D,D-transpeptidase FtsI from Buchnera aphidicola subsp. Schizaphis graminum (strain Sg).